The following is a 146-amino-acid chain: Antiholin-like protein LrgA (146 aa).

Transmembrane regions (helical) follow at residues 7–29 (YGFL…IAAI), 34–53 (IPAS…LKVI), 65–87 (LTSL…LGVM), and 97–119 (VILL…ILSL).

Belongs to the CidA/LrgA family. LrgA subfamily.

It is found in the cell membrane. Inhibits the expression or activity of extracellular murein hydrolases by interacting, possibly with LrgB, with the holin-like protein CidA. The LrgAB and CidA proteins may affect the proton motive force of the membrane. May be involved in programmed cell death (PCD), possibly triggering PCD in response to antibiotics and environmental stresses. The chain is Antiholin-like protein LrgA from Bacillus subtilis (strain 168).